Reading from the N-terminus, the 133-residue chain is p53 and DNA damage-regulated protein 1 (133 aa).

Belongs to the prefoldin subunit beta family. Component of the PAQosome complex which is responsible for the biogenesis of several protein complexes and which consists of R2TP complex members RUVBL1, RUVBL2, RPAP3 and PIH1D1, URI complex members PFDN2, PFDN6, PDRG1, UXT and URI1 as well as ASDURF, POLR2E and DNAAF10/WDR92.

It localises to the cytoplasm. Its function is as follows. May play a role in chaperone-mediated protein folding. The polypeptide is p53 and DNA damage-regulated protein 1 (Pdrg1) (Mus musculus (Mouse)).